The primary structure comprises 109 residues: Thiosulfate sulfurtransferase GlpE (109 aa).

In terms of domain architecture, Rhodanese spans 17–105 (AQGQALLLDI…WQRAYPEEVA (89 aa)). The active-site Cysteine persulfide intermediate is Cys-65.

It belongs to the GlpE family.

It is found in the cytoplasm. The enzyme catalyses thiosulfate + hydrogen cyanide = thiocyanate + sulfite + 2 H(+). It catalyses the reaction thiosulfate + [thioredoxin]-dithiol = [thioredoxin]-disulfide + hydrogen sulfide + sulfite + 2 H(+). Transferase that catalyzes the transfer of sulfur from thiosulfate to thiophilic acceptors such as cyanide or dithiols. May function in a CysM-independent thiosulfate assimilation pathway by catalyzing the conversion of thiosulfate to sulfite, which can then be used for L-cysteine biosynthesis. In Edwardsiella ictaluri (strain 93-146), this protein is Thiosulfate sulfurtransferase GlpE.